The primary structure comprises 517 residues: Ribonuclease Y (517 aa).

A helical membrane pass occupies residues 1-21 (MIEVVVGIGAGLIGIGAGYLV). The KH domain maps to 207–273 (LINVVNIKND…TRVIELLVED (67 aa)). The region spanning 333 to 426 (ALAHSLEVAH…VCAADALSAA (94 aa)) is the HD domain.

This sequence belongs to the RNase Y family.

The protein resides in the cell membrane. Endoribonuclease that initiates mRNA decay. The polypeptide is Ribonuclease Y (Campylobacter fetus subsp. fetus (strain 82-40)).